Here is a 386-residue protein sequence, read N- to C-terminus: Lycopene beta-cyclase (386 aa).

3 to 33 lines the NAD(+) pocket; it reads DLILVGGGLANGLIAWRLRQRYPQLNLLLIE.

Belongs to the lycopene cyclase family. FAD serves as cofactor.

It carries out the reaction a carotenoid psi-end group = a carotenoid beta-end derivative. The catalysed reaction is all-trans-lycopene = gamma-carotene. It catalyses the reaction gamma-carotene = all-trans-beta-carotene. It functions in the pathway carotenoid biosynthesis; beta-carotene biosynthesis. Functionally, catalyzes the double cyclization reaction which converts lycopene to beta-carotene. This is Lycopene beta-cyclase from Pseudescherichia vulneris (Escherichia vulneris).